Reading from the N-terminus, the 465-residue chain is Soluble pyridine nucleotide transhydrogenase (465 aa).

36-45 (ERYDNVGGGC) contributes to the FAD binding site.

Belongs to the class-I pyridine nucleotide-disulfide oxidoreductase family. FAD serves as cofactor.

The protein resides in the cytoplasm. It catalyses the reaction NAD(+) + NADPH = NADH + NADP(+). Conversion of NADPH, generated by peripheral catabolic pathways, to NADH, which can enter the respiratory chain for energy generation. The chain is Soluble pyridine nucleotide transhydrogenase from Sodalis glossinidius (strain morsitans).